We begin with the raw amino-acid sequence, 271 residues long: DNA repair protein RecO (271 aa).

The segment covering 249–264 (VRVEDSVRQDGDRDST) has biased composition (basic and acidic residues). Residues 249–271 (VRVEDSVRQDGDRDSTTRTSSPA) form a disordered region.

This sequence belongs to the RecO family.

Its function is as follows. Involved in DNA repair and RecF pathway recombination. The chain is DNA repair protein RecO from Rhodococcus jostii (strain RHA1).